Reading from the N-terminus, the 933-residue chain is Isoleucine--tRNA ligase (933 aa).

Positions proline 57–histidine 67 match the 'HIGH' region motif. Glutamate 554 provides a ligand contact to L-isoleucyl-5'-AMP. Positions lysine 595–serine 599 match the 'KMSKS' region motif. Lysine 598 provides a ligand contact to ATP.

This sequence belongs to the class-I aminoacyl-tRNA synthetase family. IleS type 1 subfamily. In terms of assembly, monomer.

The protein localises to the cytoplasm. It catalyses the reaction tRNA(Ile) + L-isoleucine + ATP = L-isoleucyl-tRNA(Ile) + AMP + diphosphate. Catalyzes the attachment of isoleucine to tRNA(Ile). As IleRS can inadvertently accommodate and process structurally similar amino acids such as valine, to avoid such errors it has two additional distinct tRNA(Ile)-dependent editing activities. One activity is designated as 'pretransfer' editing and involves the hydrolysis of activated Val-AMP. The other activity is designated 'posttransfer' editing and involves deacylation of mischarged Val-tRNA(Ile). The protein is Isoleucine--tRNA ligase of Streptococcus pyogenes serotype M1.